The chain runs to 137 residues: Nucleoside diphosphate kinase (137 aa).

Residues Lys10, Phe58, Arg86, Thr92, Arg103, and Asn113 each coordinate ATP. His116 functions as the Pros-phosphohistidine intermediate in the catalytic mechanism.

The protein belongs to the NDK family. As to quaternary structure, homotetramer. The cofactor is Mg(2+).

The protein localises to the cytoplasm. The catalysed reaction is a 2'-deoxyribonucleoside 5'-diphosphate + ATP = a 2'-deoxyribonucleoside 5'-triphosphate + ADP. The enzyme catalyses a ribonucleoside 5'-diphosphate + ATP = a ribonucleoside 5'-triphosphate + ADP. Major role in the synthesis of nucleoside triphosphates other than ATP. The ATP gamma phosphate is transferred to the NDP beta phosphate via a ping-pong mechanism, using a phosphorylated active-site intermediate. This is Nucleoside diphosphate kinase from Helicobacter pylori (strain Shi470).